The primary structure comprises 414 residues: Cytochrome P450 GfsF (414 aa).

The interval 1 to 32 (MTDTTLVEAGDPAEDAPEWPMKRDTGCPFDPP) is disordered. 6 residues coordinate heme b: H75, H107, R111, R303, H361, and C363.

The protein belongs to the cytochrome P450 family. In terms of assembly, monomer. Heme b is required as a cofactor.

It participates in antibiotic biosynthesis. In terms of biological role, involved in the synthesis of the 16-membered macrolide antibiotics FD-891 and FD-892. Consecutively catalyzes epoxidation of C8-C9 and then hydroxylation at C10 to convert 25-O-methyl-FD-892 to FD-891. Consecutively catalyzes epoxidation of C8-C9 and then hydroxylation at C10 to convert 8,9-epoxy-FD-892 to 25-O-demethyl-FD-891 as well as converting 25-oxo-FD-892 to 8,9-epoxy-25-oxo-FD-892 and 8,9-epoxy-10-hydroxy-25-oxo-FD-892. In vitro is furnished with P.putida putidaredoxin and putidaredoxin reductase to provide the required two-electron reduction. The sequence is that of Cytochrome P450 GfsF from Streptomyces halstedii.